We begin with the raw amino-acid sequence, 178 residues long: Large ribosomal subunit protein uL5 (178 aa).

Ala2 carries the post-translational modification N-acetylalanine. Residue Lys38 forms a Glycyl lysine isopeptide (Lys-Gly) (interchain with G-Cter in SUMO2) linkage. Residues Thr44 and Thr47 each carry the phosphothreonine modification. At Lys52 the chain carries N6-acetyllysine; alternate. Lys52 is covalently cross-linked (Glycyl lysine isopeptide (Lys-Gly) (interchain with G-Cter in SUMO2); alternate). Lys85 is subject to N6-acetyllysine. A Glycyl lysine isopeptide (Lys-Gly) (interchain with G-Cter in SUMO2) cross-link involves residue Lys154.

The protein belongs to the universal ribosomal protein uL5 family. Component of the large ribosomal subunit (LSU). Part of the 5S RNP complex, which is a LSU subcomplex composed of the 5S RNA, RPL5 and RPL11. Component of a hexameric 5S RNP precursor complex, composed of 5S RNA, RRS1, RPF2/BXDC1, RPL5, RPL11 and HEATR3; this complex acts as a precursor for ribosome assembly. Interacts with PML. Interacts with MDM2 (via its RanBP2-type zinc finger domain); negatively regulates MDM2-mediated TP53 ubiquitination and degradation. Interacts with NOP53; retains RPL11 into the nucleolus.

The protein localises to the nucleus. It is found in the nucleolus. Its subcellular location is the cytoplasm. Component of the ribosome, a large ribonucleoprotein complex responsible for the synthesis of proteins in the cell. The small ribosomal subunit (SSU) binds messenger RNAs (mRNAs) and translates the encoded message by selecting cognate aminoacyl-transfer RNA (tRNA) molecules. The large subunit (LSU) contains the ribosomal catalytic site termed the peptidyl transferase center (PTC), which catalyzes the formation of peptide bonds, thereby polymerizing the amino acids delivered by tRNAs into a polypeptide chain. The nascent polypeptides leave the ribosome through a tunnel in the LSU and interact with protein factors that function in enzymatic processing, targeting, and the membrane insertion of nascent chains at the exit of the ribosomal tunnel. As part of the 5S RNP/5S ribonucleoprotein particle it is an essential component of the LSU, required for its formation and the maturation of rRNAs. It also couples ribosome biogenesis to p53/TP53 activation. As part of the 5S RNP it accumulates in the nucleoplasm and inhibits MDM2, when ribosome biogenesis is perturbed, mediating the stabilization and the activation of TP53. Promotes nucleolar location of PML. This Oryctolagus cuniculus (Rabbit) protein is Large ribosomal subunit protein uL5 (RPL11).